Consider the following 133-residue polypeptide: Hemoglobin subunit alpha-2 (133 aa).

Positions 1-133 (NVKAVWEHVK…VKNVLTSRYR (133 aa)) constitute a Globin domain. O2 is bound at residue H50. Residue H79 coordinates heme b.

The protein belongs to the globin family. Minor hemoglobin is a heterotetramer of two alpha-2 chains and two beta-2 chains. As to expression, red blood cells.

Functionally, involved in oxygen transport from the lung to the various peripheral tissues. The protein is Hemoglobin subunit alpha-2 of Pleurodeles waltl (Iberian ribbed newt).